A 970-amino-acid chain; its full sequence is Protein translocase subunit SecA (970 aa).

Residues glutamine 99, 117–121, and aspartate 631 each bind ATP; that span reads GEGKT.

Belongs to the SecA family. As to quaternary structure, monomer and homodimer. Part of the essential Sec protein translocation apparatus which comprises SecA, SecYEG and auxiliary proteins SecDF. Other proteins may also be involved.

Its subcellular location is the cell inner membrane. It localises to the cytoplasm. It carries out the reaction ATP + H2O + cellular proteinSide 1 = ADP + phosphate + cellular proteinSide 2.. Part of the Sec protein translocase complex. Interacts with the SecYEG preprotein conducting channel. Has a central role in coupling the hydrolysis of ATP to the transfer of proteins into and across the cell membrane, serving as an ATP-driven molecular motor driving the stepwise translocation of polypeptide chains across the membrane. This is Protein translocase subunit SecA from Chlamydia caviae (strain ATCC VR-813 / DSM 19441 / 03DC25 / GPIC) (Chlamydophila caviae).